We begin with the raw amino-acid sequence, 199 residues long: DnaJ homolog subfamily C member 5B (199 aa).

Serine 14 bears the Phosphoserine mark. A J domain is found at 19–84 (ALYEILGLHK…SKRSIYDKYG (66 aa)).

As to quaternary structure, interacts with the chaperone complex consisting of HSC70 and SGTA. In terms of processing, palmitoylated. Palmitoylation is not required for membrane association. In terms of tissue distribution, testis specific.

Its subcellular location is the membrane. The polypeptide is DnaJ homolog subfamily C member 5B (DNAJC5B) (Homo sapiens (Human)).